A 1147-amino-acid polypeptide reads, in one-letter code: PDZ domain-containing protein 8 (1147 aa).

A helical membrane pass occupies residues 2–24 (GLLLLILASAVLGSFLTLLAQFL). The SMP-LTD domain maps to 87-293 (APPTLETCYF…LPSYKIRFKP (207 aa)). The region spanning 365-448 (TVELIKGNLQ…RVLVYYQRPA (84 aa)) is the PDZ domain. 3 positions are modified to phosphoserine: serine 490, serine 515, and serine 532. The interval 504–673 (ELKEETQPLS…DSSDDPQMWE (170 aa)) is disordered. Over residues 510–524 (QPLSHSPKRTPTTLS) the composition is skewed to polar residues. Positions 557 to 576 (KPSTLKTSETTEAAQVSKPQ) are enriched in polar residues. The segment covering 580–596 (FKPPVPPRPQGRVPLPP) has biased composition (pro residues). The segment at 833 to 884 (KHSFQDTQFQNPTWCDYCKKKVWTKAASQCMFCAYVCHKKCQEKCLAETPLC) adopts a Phorbol-ester/DAG-type zinc-finger fold. The segment at 948-990 (RLSEPGTDLVEPSPKHTPNTSDNEGSDTEVCGSNSPSKRGNSA) is disordered. A phosphoserine mark is found at serine 960 and serine 973. Residues 978 to 987 (CGSNSPSKRG) are compositionally biased toward polar residues. Residues 1021–1056 (PTEERIQKLEFMLDKLQNEIDQELEHNNSLVREEKE) adopt a coiled-coil conformation. The segment covering 1126–1137 (QLIDSQPFSNIS) has biased composition (polar residues). A disordered region spans residues 1126 to 1147 (QLIDSQPFSNISDDLFGPSESV).

In terms of assembly, interacts with MSN.

It is found in the endoplasmic reticulum membrane. Molecular tethering protein that connects endoplasmic reticulum and mitochondria membranes. PDZD8-dependent endoplasmic reticulum-mitochondria membrane tethering is essential for endoplasmic reticulum-mitochondria Ca(2+) transfer. In neurons, involved in the regulation of dendritic Ca(2+) dynamics by regulating mitochondrial Ca(2+) uptake in neurons. This chain is PDZ domain-containing protein 8, found in Mus musculus (Mouse).